The primary structure comprises 404 residues: Nicotinate phosphoribosyltransferase (404 aa).

The residue at position 224 (His224) is a Phosphohistidine; by autocatalysis.

It belongs to the NAPRTase family. Transiently phosphorylated on a His residue during the reaction cycle. Phosphorylation strongly increases the affinity for substrates and increases the rate of nicotinate D-ribonucleotide production. Dephosphorylation regenerates the low-affinity form of the enzyme, leading to product release.

It carries out the reaction nicotinate + 5-phospho-alpha-D-ribose 1-diphosphate + ATP + H2O = nicotinate beta-D-ribonucleotide + ADP + phosphate + diphosphate. The protein operates within cofactor biosynthesis; NAD(+) biosynthesis; nicotinate D-ribonucleotide from nicotinate: step 1/1. In terms of biological role, catalyzes the synthesis of beta-nicotinate D-ribonucleotide from nicotinate and 5-phospho-D-ribose 1-phosphate at the expense of ATP. The protein is Nicotinate phosphoribosyltransferase of Photorhabdus laumondii subsp. laumondii (strain DSM 15139 / CIP 105565 / TT01) (Photorhabdus luminescens subsp. laumondii).